The primary structure comprises 630 residues: Beta-phellandrene synthase, chloroplastic (630 aa).

The transit peptide at 1–48 (MALVSSAPKSCLHKSLIRSTHHELKPLRRTIPTLGMCRRGKSFTPSVS) directs the protein to the chloroplast. 3 residues coordinate Mg(2+): aspartate 381, aspartate 385, and aspartate 533. The DDXXD motif motif lies at 381–385 (DDIYD).

It belongs to the terpene synthase family. Tpsd subfamily. Mg(2+) serves as cofactor. The cofactor is Mn(2+). K(+) is required as a cofactor.

The protein resides in the plastid. It localises to the chloroplast. It catalyses the reaction (2E)-geranyl diphosphate = (-)-beta-phellandrene + diphosphate. It functions in the pathway terpene metabolism; oleoresin biosynthesis. Converts geranyl diphosphate to four products with (-)-(4S)-beta-phellandrene (52%) as the major olefin, and lesser amounts of (-)-(1S,5S)-beta-pinene (34%), (-)-1S,5S-alpha-pinene (8.5%), and (-)-(4S)-limonene (6%). Involved in defensive oleoresin formation in conifers in response to insect attack or other injury. Involved in monoterpene (C10) olefins biosynthesis. This Abies grandis (Grand fir) protein is Beta-phellandrene synthase, chloroplastic (ag8).